Here is a 493-residue protein sequence, read N- to C-terminus: Cysteine--tRNA ligase (493 aa).

Cys29 contributes to the Zn(2+) binding site. The 'HIGH' region motif lies at Ala31–His41. The Zn(2+) site is built by Cys214, His239, and Glu243. The short motif at Lys270–Ser274 is the 'KMSKS' region element. Residue Lys273 participates in ATP binding.

It belongs to the class-I aminoacyl-tRNA synthetase family. Monomer. Zn(2+) serves as cofactor.

The protein resides in the cytoplasm. The enzyme catalyses tRNA(Cys) + L-cysteine + ATP = L-cysteinyl-tRNA(Cys) + AMP + diphosphate. This Renibacterium salmoninarum (strain ATCC 33209 / DSM 20767 / JCM 11484 / NBRC 15589 / NCIMB 2235) protein is Cysteine--tRNA ligase.